The sequence spans 361 residues: F-box protein pof7 (361 aa).

Residues 105–157 form the F-box domain; that stretch reads NESVVPNILKLPDEVLLVILENCIRDLHDLRYLSSIALTCKHFAKALRADSLY.

Interacts with skp1.

It localises to the cytoplasm. This chain is F-box protein pof7 (pof7), found in Schizosaccharomyces pombe (strain 972 / ATCC 24843) (Fission yeast).